The chain runs to 700 residues: Probable transcription factor FUP6 (700 aa).

Disordered regions lie at residues 343–364 (SEAG…NRHS) and 577–624 (FDSV…PLNQ). The segment covering 577–595 (FDSVHSGRDSVSSAMNYQS) has biased composition (polar residues). Over residues 596–607 (DSRKRARLDTES) the composition is skewed to basic and acidic residues. Polar residues predominate over residues 608–623 (NPRSSQRNDGSGQPLN).

It localises to the nucleus. Its function is as follows. Probable transcrition factor; part of the gene cluster that mediates the biosynthesis of the mycotoxin fusaproliferin (FUP) that belongs to the class of bicyclic sesterterpenoids. The chain is Probable transcription factor FUP6 from Fusarium proliferatum (strain ET1) (Orchid endophyte fungus).